The following is a 713-amino-acid chain: Early transcription factor 82 kDa subunit (713 aa).

It belongs to the poxviridae VETF large subunit family. As to quaternary structure, heterodimer of a 70 kDa and a 82 kDa subunit. Part of the early transcription complex composed of ETF, RAP94, and the DNA-directed RNA polymerase.

Functionally, acts with RNA polymerase to initiate transcription from early gene promoters. Is recruited by the RPO-associated protein of 94 kDa (RAP94) to form the early transcription complex, which also contains the core RNA polymerase. ETF heterodimer binds to early gene promoters. The chain is Early transcription factor 82 kDa subunit (VETFL) from Yaba monkey tumor virus (strain VR587) (YMTV).